The following is a 596-amino-acid chain: MSQGKIIKVSGPLVLASGMQEANIQDICRVGDLGLIGEIIEMRRDQASIQVYEETSGLGPGEPVITTGSPLSVELGPGLISQMFDGIQRPLERFQTITESDFLVRGVQLPNLDRETKWNFVPSLSVGDAVEAGDILGTVQETNLVEHRIMVPVGVSGRLANISAGSFTVEETVYEIEQAEGSIFKGTLMQKWPVRRGRPFAQKLIPVEPLVTGQRVIDTFFPVTKGGAAAVPGPFGAGKTVVQHQVAKFANVDIVIYVGCGERGNEMTDVLNEFPELIDPSTGQSIMQRTVLIANTSNMPVAAREASIYTGITIAEYFRDMGYSVAIMADSTSRWAEALREMSGRLEEMPGDEGYPAYLGSRIAEYYERAGRVKTLGSTAREGSITAIGAVSPPGGDISEPVTQNTLRIVKVFWGLDAQLAQRRHFPAINWLSSYSLYLDEVGAYIDQHEKIAWAEKVTKAMNILQKESELQEIVRLVGLDSLSEKDRLTMNAAKMIREDYLQQNAFDDVDTYTSFKKQVALLSNILTFDAEANRALELGAYFREIMEGTVELRDRIARSKFVHEDQLEKIQALSQTIEETLHQILAQGGLDNERH.

233 to 240 (GPFGAGKT) provides a ligand contact to ATP.

It belongs to the ATPase alpha/beta chains family.

It carries out the reaction ATP + H2O + 4 H(+)(in) = ADP + phosphate + 5 H(+)(out). Functionally, produces ATP from ADP in the presence of a proton gradient across the membrane. The V-type alpha chain is a catalytic subunit. This Streptococcus gordonii (strain Challis / ATCC 35105 / BCRC 15272 / CH1 / DL1 / V288) protein is V-type ATP synthase alpha chain.